Consider the following 186-residue polypeptide: uncharacterized protein (186 aa).

Positions 1–21 (MIHVKYIILGFIMVSSLNLYA) are cleaved as a signal peptide.

This is an uncharacterized protein from Rickettsia conorii (strain ATCC VR-613 / Malish 7).